Reading from the N-terminus, the 147-residue chain is UPF0178 protein AFE_3267 (147 aa).

It belongs to the UPF0178 family.

The polypeptide is UPF0178 protein AFE_3267 (Acidithiobacillus ferrooxidans (strain ATCC 23270 / DSM 14882 / CIP 104768 / NCIMB 8455) (Ferrobacillus ferrooxidans (strain ATCC 23270))).